A 494-amino-acid polypeptide reads, in one-letter code: Ell-associated factor Eaf (494 aa).

The span at 119–138 (KTRSEVTNKPSLMSATNAPM) shows a compositional bias: polar residues. 2 disordered regions span residues 119-212 (KTRS…PAWH) and 243-494 (QANI…DDDD). Low complexity predominate over residues 139–156 (SNGAPVPSSAAAGTGSAG). Positions 159-178 (ENSTMRISSKTKVSTGSRRN) are enriched in polar residues. Ser188 is subject to Phosphoserine. Polar residues-rich tracts occupy residues 243 to 256 (QANI…SSAG) and 280 to 306 (QQLT…NNYA). Positions 307–319 (QQQQQQQQQQLQQ) are enriched in low complexity. Residues 320 to 332 (RASFSHSNHSNSM) show a composition bias toward polar residues. Residues 344-373 (QTAQSMAQAAAALEQQIGGELSASSSSSES) are compositionally biased toward low complexity. A compositionally biased stretch (acidic residues) spans 374–389 (DSSDSDSGSDSDDSTE). Residues 414–424 (HQQQQHMHQLP) show a composition bias toward low complexity. A compositionally biased stretch (basic residues) spans 437–454 (SHHHHQQQQQSHHHHHHQ). Composition is skewed to low complexity over residues 455 to 464 (QQQQQQHQQS) and 475 to 488 (NDLL…SSNS).

Belongs to the EAF family.

It localises to the nucleus. In terms of biological role, promotes transcriptional elongation by Su(Tpl)/ELL. Essential for development. The polypeptide is Ell-associated factor Eaf (Drosophila virilis (Fruit fly)).